Consider the following 426-residue polypeptide: NADH-quinone oxidoreductase subunit D 1 (426 aa).

Residues methionine 1 to proline 51 are disordered.

Belongs to the complex I 49 kDa subunit family. As to quaternary structure, NDH-1 is composed of 14 different subunits. Subunits NuoB, C, D, E, F, and G constitute the peripheral sector of the complex.

It is found in the cell inner membrane. It catalyses the reaction a quinone + NADH + 5 H(+)(in) = a quinol + NAD(+) + 4 H(+)(out). Functionally, NDH-1 shuttles electrons from NADH, via FMN and iron-sulfur (Fe-S) centers, to quinones in the respiratory chain. The immediate electron acceptor for the enzyme in this species is believed to be ubiquinone. Couples the redox reaction to proton translocation (for every two electrons transferred, four hydrogen ions are translocated across the cytoplasmic membrane), and thus conserves the redox energy in a proton gradient. This Opitutus terrae (strain DSM 11246 / JCM 15787 / PB90-1) protein is NADH-quinone oxidoreductase subunit D 1.